The primary structure comprises 217 residues: MNKILFTAVEARVVGCLLEKQVTTPDQYPMSLNGVVTACNQKSNREPVMSLTDSEVQNTLDMLVKKHQLTALNTGSRVVKYEQRFCNSTFGQMKLSAAEVAIIANLLLRGAQTPGELRIRCARIHDFADMTEVEQTLERLAQHEHGQLVVRLAREPGKRESRYMHLLSGEVDESSRADGHHPDDHRGDLEGRIAQLEQQVATLQRQIAQLLNNGEVK.

Residues 169-188 form a disordered region; sequence GEVDESSRADGHHPDDHRGD. Residues 173–188 show a composition bias toward basic and acidic residues; the sequence is ESSRADGHHPDDHRGD.

This sequence belongs to the UPF0502 family.

This chain is UPF0502 protein ETA_20480, found in Erwinia tasmaniensis (strain DSM 17950 / CFBP 7177 / CIP 109463 / NCPPB 4357 / Et1/99).